Reading from the N-terminus, the 161-residue chain is Ribonuclease P protein component 2 (161 aa).

The protein belongs to the eukaryotic/archaeal RNase P protein component 2 family. In terms of assembly, consists of a catalytic RNA component and at least 4-5 protein subunits.

The protein localises to the cytoplasm. The enzyme catalyses Endonucleolytic cleavage of RNA, removing 5'-extranucleotides from tRNA precursor.. In terms of biological role, part of ribonuclease P, a protein complex that generates mature tRNA molecules by cleaving their 5'-ends. The protein is Ribonuclease P protein component 2 of Methanopyrus kandleri (strain AV19 / DSM 6324 / JCM 9639 / NBRC 100938).